The following is a 394-amino-acid chain: Flap endonuclease 1 (394 aa).

An N-domain region spans residues M1–K104. D34 provides a ligand contact to Mg(2+). The DNA site is built by R47 and R70. Mg(2+) is bound by residues D86, E158, E160, D179, and D181. Residues D122 to H253 form an I-domain region. E158 serves as a coordination point for DNA. DNA contacts are provided by G231 and D233. D233 lines the Mg(2+) pocket. Positions Q341–F349 are interaction with PCNA. Over residues E356–E383 the composition is skewed to basic and acidic residues. The tract at residues E356–A394 is disordered. Over residues K384 to A394 the composition is skewed to basic residues.

This sequence belongs to the XPG/RAD2 endonuclease family. FEN1 subfamily. As to quaternary structure, interacts with PCNA. Three molecules of dnr-8/fen1 bind to one PCNA trimer with each molecule binding to one PCNA monomer. PCNA stimulates the nuclease activity without altering cleavage specificity. Mg(2+) is required as a cofactor. In terms of processing, phosphorylated. Phosphorylation upon DNA damage induces relocalization to the nuclear plasma.

Its subcellular location is the nucleus. It localises to the nucleolus. The protein localises to the nucleoplasm. The protein resides in the mitochondrion. Functionally, structure-specific nuclease with 5'-flap endonuclease and 5'-3' exonuclease activities involved in DNA replication and repair. During DNA replication, cleaves the 5'-overhanging flap structure that is generated by displacement synthesis when DNA polymerase encounters the 5'-end of a downstream Okazaki fragment. It enters the flap from the 5'-end and then tracks to cleave the flap base, leaving a nick for ligation. Also involved in the long patch base excision repair (LP-BER) pathway, by cleaving within the apurinic/apyrimidinic (AP) site-terminated flap. Acts as a genome stabilization factor that prevents flaps from equilibrating into structures that lead to duplications and deletions. Also possesses 5'-3' exonuclease activity on nicked or gapped double-stranded DNA, and exhibits RNase H activity. Also involved in replication and repair of rDNA and in repairing mitochondrial DNA. The sequence is that of Flap endonuclease 1 (dnr-8) from Neurospora crassa (strain ATCC 24698 / 74-OR23-1A / CBS 708.71 / DSM 1257 / FGSC 987).